Reading from the N-terminus, the 709-residue chain is MGLNAKSVCSTSSTEPNGSIVTTAPSNGEVSSSIVVVVSSSSISSSSDSPIAILPHPDPIPSTSFSSASQRSEEELPGTSAASRTDEMCSCDSQNLAASTAATSNGNKRKRRLSSDSNEDPELGFEPPSAKRQQRLPALYGSEQGNLSSVASSVYTSPVVSVDGQSTQELLSIRSSPAEDLSEAPHSPLPDSPDSPPSPDRGSKQTPVVVRYAAEQVVTSTVVTQKTEDDDLLDDSCEDYSYDEDDEDDVEEEDDDVEIYSSTISPASSGCSQQQAVNGERTPGLPKHQEQIHHPVSDLMINMRTPMSPAVENGLRQCPLPALAWANAADVWRLMCHRDEQDSRLRSISMLEQHPGLQPRMRAILLDWLIEVCEVYKLHRETFYLAVDYLDRYLHVAHKVQKTHLQLIGITCLFVAAKVEEIYPPKIGEFAYVTDGACTERDILNHEKILLQALDWDISPITITGWLGVYMQLNVNNRTPASFSQIGRQKSAEADDAFIYPQFSGFEFVQTSQLLDLCTLDVGMANYSYSVLAAAAISHTFSREMALRCSGLDWQVIQPCARWMEPFFRVISQKAPYLQLNEQNEQVSNKFGLGLICPNIVTDDSHIIQTHTTTMDMYDEVLMAQDAAHAMRARIQASPATALRAPESLLTPPASSHKPDEYLGDEGDETGARSGISSTTTCCNTAASNKGGKSSSNNSVTSCSSRSNP.

Disordered regions lie at residues 1-30, 43-149, 162-205, 221-289, and 642-709; these read MGLN…NGEV, ISSS…NLSS, VDGQ…GSKQ, TVVT…PKHQ, and ALRA…RSNP. Polar residues-rich tracts occupy residues 7–29, 61–70, and 91–106; these read SVCS…SNGE, PSTSFSSASQ, and CDSQ…TSNG. Phosphoserine is present on residues S114, S115, S117, and S129. The segment covering 162-175 has biased composition (polar residues); it reads VDGQSTQELLSIRS. Phosphoserine occurs at positions 187, 192, 195, and 198. Residues 187 to 199 are compositionally biased toward pro residues; the sequence is SPLPDSPDSPPSP. The span at 228–258 shows a compositional bias: acidic residues; sequence EDDDLLDDSCEDYSYDEDDEDDVEEEDDDVE. Over residues 260-277 the composition is skewed to polar residues; that stretch reads YSSTISPASSGCSQQQAV. T651 carries the phosphothreonine modification. Residues 677–709 show a composition bias toward low complexity; that stretch reads SSTTTCCNTAASNKGGKSSSNNSVTSCSSRSNP.

It belongs to the cyclin family. Cyclin E subfamily. In terms of assembly, interacts with a member of the CDK2/CDK protein kinases to form a serine/threonine kinase holoenzyme complex. The cyclin subunit imparts substrate specificity to the complex. Interacts (via C-terminus) with Z600 (via C-terminus). As to expression, isoform II is ubiquitous in early embryos and, prior to mitosis 14, is rapidly degraded in all cells except the pole (germ) cells. Expressed during G1 phase in proliferating peripheral nervous system cells. Constitutive expression in embryonic cycles lacking a G1 phase.

The protein resides in the nucleus. Essential for the control of the cell cycle at the G1/S (start) transition. Targeted by archipelago for degradation by the SFC ubiquitin ligase complex. The sequence is that of G1/S-specific cyclin-E (CycE) from Drosophila melanogaster (Fruit fly).